The sequence spans 285 residues: uncharacterized protein (285 aa).

Helical transmembrane passes span 6-26, 38-58, 84-104, 110-130, 153-173, 176-196, and 236-256; these read YLVVILTVAGVLVILGFTPLI, VFAAILFLYVFFGRQIIYIFP, IFLLDLCPFFALIGPIFIFLR, GVLAIFGFYGAAITLFGELIF, FMMHFLSFLLSLAVFLWDDGF, ISFFYIHVFALAYLSYVALMV, and LIFGVSFGLSYFAIVLLTVLV.

It localises to the cell membrane. This is an uncharacterized protein from Mycoplasma pneumoniae (strain ATCC 29342 / M129 / Subtype 1) (Mycoplasmoides pneumoniae).